The primary structure comprises 187 residues: Threonylcarbamoyl-AMP synthase (187 aa).

The YrdC-like domain occupies 3 to 187 (NSELLKIIWA…LLNGYLYRKR (185 aa)).

It belongs to the SUA5 family. TsaC subfamily.

The protein resides in the cytoplasm. The enzyme catalyses L-threonine + hydrogencarbonate + ATP = L-threonylcarbamoyladenylate + diphosphate + H2O. Functionally, required for the formation of a threonylcarbamoyl group on adenosine at position 37 (t(6)A37) in tRNAs that read codons beginning with adenine. Catalyzes the conversion of L-threonine, HCO(3)(-)/CO(2) and ATP to give threonylcarbamoyl-AMP (TC-AMP) as the acyladenylate intermediate, with the release of diphosphate. This is Threonylcarbamoyl-AMP synthase from Riesia pediculicola (strain USDA).